Consider the following 332-residue polypeptide: 2,3-diketo-L-gulonate reductase (332 aa).

His-44 functions as the Proton donor in the catalytic mechanism. Residues 168 to 174 (ITMVDMS), 224 to 225 (WK), and 304 to 306 (GHE) contribute to the NAD(+) site.

This sequence belongs to the LDH2/MDH2 oxidoreductase family. DlgD subfamily. As to quaternary structure, homodimer.

It localises to the cytoplasm. It carries out the reaction 3-dehydro-L-gulonate + NAD(+) = 2,3-dioxo-L-gulonate + NADH + H(+). The catalysed reaction is 3-dehydro-L-gulonate + NADP(+) = 2,3-dioxo-L-gulonate + NADPH + H(+). In terms of biological role, catalyzes the reduction of 2,3-diketo-L-gulonate in the presence of NADH, to form 3-keto-L-gulonate. The polypeptide is 2,3-diketo-L-gulonate reductase (Escherichia coli (strain K12 / MC4100 / BW2952)).